The primary structure comprises 424 residues: S-phase kinase-associated protein 2 (424 aa).

The interval 1–220 (MHRKHLQEIP…LSLEGLRLSD (220 aa)) is mediates interaction with hepatitis C virus non-structural protein NS5A. Positions 39 to 73 (SALEKEEPDSENIPQELLSNLGHPESPPRKRLKSK) are disordered. S64 is modified (phosphoserine). The Nuclear localization signal motif lies at 67–73 (RKRLKSK). K68 and K71 each carry N6-acetyllysine; by p300/EP300. A phosphoserine mark is found at S72 and S75. The F-box domain maps to 94–140 (GVSWDSLPDELLLGIFSCLCLPELLKVSGVCKRWYRLASDESLWQTL). 10 LRR repeats span residues 151–176 (VTGRLLSQGVIAFRCPRSFMDQPLAE), 177–204 (HFSPFRVQHMDLSNSVIEVSTLHGILSQ), 210–234 (NLSLEGLRLSDPIVNTLAKNSNLVR), 235–257 (LNLSGCSGFSEFALQTLLSSCSR), 258–284 (LDELNLSWCFDFTEKHVQVAVAHVSET), 286–308 (TQLNLSGYRKNLQKSDLSTLVRR), 309–330 (CPNLVHLDLSDSVMLKNDCFQE), 334–356 (LNYLQHLSLSRCYDIIPETLLEL), 359–378 (IPTLKTLQVFGIVPDGTLQL), and 380–401 (KEALPHLQINCSHFTTIARPTI). A Phosphoserine modification is found at S179. The interval 402-424 (GNKKNQEIWGIKCRLTLQKPSCL) is mediates interaction with IFI27.

Part of a SCF(SKP2) complex consisting of CUL1, RBX1, SKP1 and SKP2. Component of a SCF(SKP2)-like complex containing CUL1, SKP1, TRIM21 and SKP2. Interacts directly with CUL1 and SKP1. Interacts with CKS1. Interacts with ASB2 which is the substrate-recognition component of a probable ECS E3 ubiquitin-protein ligase complex; ASB2 is likely to bridge the formation of dimeric E3-ubiquitin-protein ligase complexes composed of an ECS complex and an SCF(SKP2) complex. Interacts with the cyclin-A-CDK2 complex. Interacts with ORC1, phosphorylated CDT1, phosphorylated RBL2, ELF4, phosphorylated RAG2, FOXO1, UBP43, MYC, TOB1, TAL1 and KMT2A/MLL1. Interacts with TRIM21. Interacts with cyclin-E. Interacts with IFI27; promotes the ubiquitin-mediated proteasomal degradation of hepatitis C virus/HCV non-structural protein NS5A. Interacts with CARM1. As to quaternary structure, (Microbial infection) Interacts with hepatitis C virus/HCV non-structural protein NS5A; promotes the ubiquitin-mediated proteasomal degradation of NS5A. Phosphorylated on serine and threonine resudues in response to DNA damage, promoting 'Lys-63'-linked ubiquitination of NBN. In terms of processing, ubiquitinated by the APC/C complex, leading to its degradation by the proteasome. Deubiquitinated by USP13. Post-translationally, acetylation at Lys-68 and Lys-71 increases stability through impairment of APC/C-mediated proteolysis and promotes cytoplasmic retention. Deacetylated by SIRT3.

It is found in the cytoplasm. The protein resides in the nucleus. It functions in the pathway protein modification; protein ubiquitination. Its function is as follows. Substrate recognition component of a SCF (SKP1-CUL1-F-box protein) E3 ubiquitin-protein ligase complex which mediates the ubiquitination and subsequent proteasomal degradation of target proteins involved in cell cycle progression, signal transduction and transcription. Specifically recognizes phosphorylated CDKN1B/p27kip and is involved in regulation of G1/S transition. Degradation of CDKN1B/p27kip also requires CKS1. Recognizes target proteins ORC1, CDT1, RBL2, KMT2A/MLL1, CDK9, RAG2, NBN, FOXO1, UBP43, YTHDF2, and probably MYC, TOB1 and TAL1. Degradation of TAL1 also requires STUB1. Recognizes CDKN1A in association with CCNE1 or CCNE2 and CDK2. Promotes ubiquitination and destruction of CDH1 in a CK1-dependent manner, thereby regulating cell migration. Following phosphorylation in response to DNA damage, mediates 'Lys-63'-linked ubiquitination of NBN, promoting ATM recruitment to DNA damage sites and DNA repair via homologous recombination. Through the ubiquitin-mediated proteasomal degradation of hepatitis C virus non-structural protein 5A, has an antiviral activity towards that virus. The chain is S-phase kinase-associated protein 2 (SKP2) from Homo sapiens (Human).